The sequence spans 444 residues: Transcription factor PIF5 (444 aa).

An involved in interaction with phyB region spans residues 26-39 (EDELVELLWRDGQV). Disordered regions lie at residues 154–265 (HCGS…NLSE) and 416–444 (MLGF…GKIG). Over residues 155–171 (CGSNQSTNIHQATTLPV) the composition is skewed to polar residues. Positions 175-185 (DRSKNVEERLD) are enriched in basic and acidic residues. Residues 187-197 (SSGGSSGCSYG) are compositionally biased toward low complexity. The segment covering 224 to 244 (ESVSQSDIGLTSTDDQTMGNK) has biased composition (polar residues). The segment covering 256–265 (RAAEVHNLSE) has biased composition (basic and acidic residues). The 50-residue stretch at 256 to 305 (RAAEVHNLSERRRRDRINERMKALQELIPHCSRTDKASILDEAIDYLKSL) folds into the bHLH domain. Polar residues predominate over residues 424-437 (GPQSQLSAPATTDS). S437 carries the phosphoserine modification.

As to quaternary structure, homodimer. Interacts specifically with the Pfr form of phytochrome B and with TOC1/APRR1. May form a heterodimer with PIF3. Interacts with PHYB, CRY1 and CRY2 in the nucleus in response to low blue light (LBL). Interacts with TOPP4. Associates to PTAC12/HMR/PAP5 which acts as a transcriptional coactivator. In terms of processing, phosphorylated. Additional phosphorylations induced within 60 seconds following phytochrome B photoactivation. Dephosphorylated by TOPP4 during photomorphogenesis, leading to subsequent degradation of PIF5 by the proteasomal pathway. Mainly expressed in leaves and seedlings, and, to a lower extent, in stems, fruits, flowers and roots.

It is found in the nucleus. Its function is as follows. Transcription factor acting negatively in the phytochrome B signaling pathway to promote the shade-avoidance response. Regulates PHYB abundance at the post-transcriptional level, possibly via the ubiquitin-proteasome pathway. Promotes ethylene activity in the dark. May regulate the expression of a subset of genes by binding to the G-box motif. Might be involved in the integration of light-signals to control both circadian and photomorphogenic processes. Activated by CRY1 and CRY2 in response to low blue light (LBL) by direct binding at chromatin on E-box variant 5'-CA[CT]GTG-3' to stimulate specific gene expression to adapt global physiology (e.g. hypocotyl elongation in low blue light). This is Transcription factor PIF5 from Arabidopsis thaliana (Mouse-ear cress).